A 245-amino-acid chain; its full sequence is Glycerophosphodiester phosphodiesterase (245 aa).

In terms of domain architecture, GP-PDE spans 2-241 (TKIFAHRGFK…DFPDRAVKIR (240 aa)). His7 (proton acceptor) is an active-site residue. Residues Glu34 and Asp36 each coordinate a divalent metal cation. His49 (proton donor) is an active-site residue. Position 110 (Glu110) interacts with a divalent metal cation.

Belongs to the glycerophosphoryl diester phosphodiesterase family. The cofactor is Ni(2+). It depends on Co(2+) as a cofactor. Mn(2+) is required as a cofactor.

The catalysed reaction is a sn-glycero-3-phosphodiester + H2O = an alcohol + sn-glycerol 3-phosphate + H(+). With respect to regulation, inhibited by EDTA and various organic solvents such as chloroform, toluene or benzene. Its function is as follows. Glycerophosphodiester phosphodiesterase hydrolyzes glycerophosphodiesters into glycerol-3-phosphate (G3P) and the corresponding alcohol. Can hydrolyze the model substrate bis-(p-nitrophenyl phosphate) (bis(pNPP)) to p-nitrophenol. Can also catalyze the degradation of diphenyl phosphate (DPHP) to phenyl phosphate (PHP). DPHP is an aryl phosphate ester used as a chemical additive and an industrial catalyst that can easily spread to the environment and exhibits toxicity toward organisms. In Bacillus altitudinis, this protein is Glycerophosphodiester phosphodiesterase.